The chain runs to 156 residues: Small ribosomal subunit protein uS7 (156 aa).

The protein belongs to the universal ribosomal protein uS7 family. Part of the 30S ribosomal subunit. Contacts proteins S9 and S11.

In terms of biological role, one of the primary rRNA binding proteins, it binds directly to 16S rRNA where it nucleates assembly of the head domain of the 30S subunit. Is located at the subunit interface close to the decoding center, probably blocks exit of the E-site tRNA. The chain is Small ribosomal subunit protein uS7 from Bacillus pumilus (strain SAFR-032).